The following is a 557-amino-acid chain: Cytochrome P450 734A2 (557 aa).

The chain crosses the membrane as a helical span at residues 13 to 35 (WATWRVAAVAAAAAVWVTMHVAA). Cys-495 is a binding site for heme.

The protein belongs to the cytochrome P450 family. It depends on heme as a cofactor. As to expression, expressed in roots, shoot apex, leaf sheaths and leaf blades.

It is found in the membrane. Cytochrome P450 involved in brassinosteroids (BRs) inactivation and regulation of BRs homeostasis. Is a multifunctional and multisubstrate enzyme that controls the endogenous bioactive BR content both by direct inactivation of castasterone (CS) and by decreasing the levels of BR precursors. Catalyzes the oxidation of carbon 22 hydroxylated BR intermediates to produce C26 oxidized metabolites. In Oryza sativa subsp. japonica (Rice), this protein is Cytochrome P450 734A2 (CYP734A2).